The chain runs to 64 residues: MLVLTRDIGETFSIGDDITVQILGVNGNQVRLGISAPKDIKVHRAEVYKRIANKLSQQAAQTQP.

This sequence belongs to the CsrA/RsmA family. As to quaternary structure, homodimer; the beta-strands of each monomer intercalate to form a hydrophobic core, while the alpha-helices form wings that extend away from the core.

The protein resides in the cytoplasm. Functionally, a key translational regulator that binds mRNA to regulate translation initiation and/or mRNA stability. Mediates global changes in gene expression, shifting from rapid growth to stress survival by linking envelope stress, the stringent response and the catabolite repression systems. Usually binds in the 5'-UTR; binding at or near the Shine-Dalgarno sequence prevents ribosome-binding, repressing translation, binding elsewhere in the 5'-UTR can activate translation and/or stabilize the mRNA. Its function is antagonized by small RNA(s). The protein is Translational regulator CsrA 1 of Pseudomonas syringae pv. tomato (strain ATCC BAA-871 / DC3000).